A 785-amino-acid chain; its full sequence is Putative endonuclease MutS2 (785 aa).

Gly-335–Thr-342 contributes to the ATP binding site. A coiled-coil region spans residues Thr-513–Glu-586. The tract at residues Lys-636 to Lys-785 is partially complements a deletion for mitomycin C (MMC) resistance and for chromosomal DNA transformation. Positions Pro-641–Leu-681 are KOW region. Positions Leu-710–Lys-785 constitute a Smr domain.

Belongs to the DNA mismatch repair MutS family. MutS2 subfamily. Binds to ribosomes as a homodimer. Binds to stalled/collided disomes, association is greater in (ribosome-targeted) antibiotic-treated cells (with increased stalling at specific mRNA sites). The clamp domain of one monomer binds the A-site finger, the 23S rRNA of the central protuberance and ribosomal protein uL5 of the leading (stalled) ribosome, while the other monomer binds in a gap between the ribosomal central protuberance and the L1 stalk of the leading ribosome.

It is found in the cytoplasm. In terms of biological role, acts as a ribosome collision sensor splitting the ribosome into its 2 subunits. Detects stalled/collided disomes (pairs of ribosomes where the leading ribosome is stalled and a second ribosome has collided with it) which it binds and splits, by an ATP-hydrolysis driven conformational change. Does not seem to have endoribonuclease activity (in the context of ribosome stalling). Acts upstream of the ribosome quality control system (RQC), a ribosome-associated complex that mediates the extraction of incompletely synthesized nascent chains from stalled ribosomes and their subsequent degradation, probably generates substrates for RQC. Functionally, does not seem to be involved in mismatch repair or in the prevention of interspecific recombination during DNA transformation. Might be involved in homologous recombination. Putative endonuclease that may be involved in the suppression of homologous recombination and may therefore have a key role in the control of bacterial genetic diversity. The protein is Putative endonuclease MutS2 of Bacillus subtilis (strain 168).